The following is a 176-amino-acid chain: Probable inosine/xanthosine triphosphatase (176 aa).

D36 is a binding site for Mg(2+).

Belongs to the YjjX NTPase family. Homodimer. Mg(2+) serves as cofactor. The cofactor is Mn(2+).

The catalysed reaction is XTP + H2O = XDP + phosphate + H(+). It catalyses the reaction ITP + H2O = IDP + phosphate + H(+). Its function is as follows. Phosphatase that hydrolyzes non-canonical purine nucleotides such as XTP and ITP to their respective diphosphate derivatives. Probably excludes non-canonical purines from DNA/RNA precursor pool, thus preventing their incorporation into DNA/RNA and avoiding chromosomal lesions. The chain is Probable inosine/xanthosine triphosphatase from Saccharolobus solfataricus (strain ATCC 35092 / DSM 1617 / JCM 11322 / P2) (Sulfolobus solfataricus).